The chain runs to 921 residues: Phototropin-1B (921 aa).

Residues M1 to G11 are compositionally biased toward gly residues. 2 disordered regions span residues M1–L59 and T88–A118. Residues S40 to A51 are compositionally biased toward low complexity. A compositionally biased stretch (polar residues) spans R97–A117. Residues V123–S197 form the PAS 1 domain. Residues N172–Q177, R190, N205, N215, and Q236 contribute to the FMN site. C173 is modified (S-4a-FMN cysteine). Residues S197–V251 enclose the PAC 1 domain. A compositionally biased stretch (polar residues) spans R286–T295. Disordered stretches follow at residues R286 to R345 and E366 to D391. 2 stretches are compositionally biased toward basic and acidic residues: residues P312 to S321 and E366 to D376. Residues R400 to Q473 enclose the PAS 2 domain. FMN-binding positions include N449–Q454, R467, N482, N492, and Q513. C450 carries the post-translational modification S-4a-FMN cysteine. Residues A474–G528 enclose the PAC 2 domain. One can recognise a Protein kinase domain in the interval F594–F881. ATP-binding positions include L600–V608 and K623. The Proton acceptor role is filled by D719.

The protein belongs to the protein kinase superfamily. Ser/Thr protein kinase family. As to quaternary structure, homodimer. Requires FMN as cofactor. Post-translationally, autophosphorylated in response to blue light irradiation. In terms of processing, 2 molecules of FMN bind covalently to cysteines after exposure to blue light and are reversed in the dark.

It carries out the reaction L-seryl-[protein] + ATP = O-phospho-L-seryl-[protein] + ADP + H(+). The catalysed reaction is L-threonyl-[protein] + ATP = O-phospho-L-threonyl-[protein] + ADP + H(+). Functionally, protein kinase that acts as a blue light photoreceptor in a signal-transduction pathway for phototropic responses. Regulates a wide range of physiological activities in plants that maximize the efficiency of photosynthesis, such as chloroplast relocations, stomata opening, and leaf expansion. The sequence is that of Phototropin-1B (PHOT1B) from Oryza sativa subsp. japonica (Rice).